The chain runs to 406 residues: MLNNTLFFKQSEIHTISSYANRINDEVKSGDIGYYHLIDTSLNLIDESLQFIQDKEYVKNIVLVGMGGSSCGVKALRDMLFNEKSNQRELFILDNTSSHSFNKTLEKIKLEESLFLIISKTGSTIEVVSLFKLLIEHFKLDMQELKKYFVFITDKDSKLHQEGENLGIKCFFIPANVGGRFSILSAVGIVPLCFCGYNAKALLEGAKACFEDFFTHKKDEILQKAYHYCTHKNANINVLFSYSDAFKGFNEWYIQLIAESLGKKQGYKRIGLTPIALIGARDQHSFLQLIMDGPKNKTVTFLKIKDAQKAPIIPDIHFKFLDSLSNKVNLHELLNAQCDATMHALIAENLSVDVIELEKLDAWHAGYLMYYYELFTSTCGVMLGINTYDQPGVEVGKLILKNILNS.

The active-site Proton donor is Glu-259. Active-site residues include His-284 and Lys-397.

This sequence belongs to the GPI family.

Its subcellular location is the cytoplasm. It carries out the reaction alpha-D-glucose 6-phosphate = beta-D-fructose 6-phosphate. Its pathway is carbohydrate biosynthesis; gluconeogenesis. It participates in carbohydrate degradation; glycolysis; D-glyceraldehyde 3-phosphate and glycerone phosphate from D-glucose: step 2/4. Functionally, catalyzes the reversible isomerization of glucose-6-phosphate to fructose-6-phosphate. This is Glucose-6-phosphate isomerase from Campylobacter jejuni subsp. jejuni serotype O:2 (strain ATCC 700819 / NCTC 11168).